Reading from the N-terminus, the 303-residue chain is N-acetyl-D-glucosamine kinase (303 aa).

Residues 4 to 11 (GFDIGGTK) and 133 to 140 (GVGGGLVL) each bind ATP. Positions 157, 177, 179, and 184 each coordinate Zn(2+).

The protein belongs to the ROK (NagC/XylR) family. NagK subfamily.

It carries out the reaction N-acetyl-D-glucosamine + ATP = N-acetyl-D-glucosamine 6-phosphate + ADP + H(+). It functions in the pathway cell wall biogenesis; peptidoglycan recycling. Functionally, catalyzes the phosphorylation of N-acetyl-D-glucosamine (GlcNAc) derived from cell-wall degradation, yielding GlcNAc-6-P. This Salmonella paratyphi A (strain ATCC 9150 / SARB42) protein is N-acetyl-D-glucosamine kinase.